Reading from the N-terminus, the 177-residue chain is Small ribosomal subunit protein eS10z (177 aa).

The interval 90-177 is disordered; the sequence is TLKKSAKPGG…AAAPSGSGFP (88 aa). Over residues 108–140 the composition is skewed to basic and acidic residues; the sequence is DRQRGPPRSDGDRPRFGDRDGYRGGPRGGDEKG. Residues 141–150 show a composition bias toward low complexity; it reads GAPADFQPSF. Positions 151-165 are enriched in gly residues; that stretch reads QGGGGRPGFGRGAGG. The segment covering 166–177 has biased composition (low complexity); that stretch reads YSAAAPSGSGFP.

The protein belongs to the eukaryotic ribosomal protein eS10 family.

The protein localises to the cytoplasm. This chain is Small ribosomal subunit protein eS10z (RPS10A), found in Arabidopsis thaliana (Mouse-ear cress).